The sequence spans 300 residues: FeMo cofactor biosynthesis protein NifB (300 aa).

One can recognise a Radical SAM core domain in the interval 24–266; that stretch reads HDKVGRVHLP…PQFRACGQCR (243 aa). [4Fe-4S] cluster is bound by residues Cys-38, Cys-42, and Cys-45. S-adenosyl-L-methionine-binding residues include Gly-93, Thr-144, and Ile-196. [4Fe-4S] cluster-binding residues include Cys-262 and Cys-265.

The protein belongs to the radical SAM superfamily. NifB family. Monomer. [4Fe-4S] cluster is required as a cofactor.

It participates in cofactor biosynthesis; Fe-Mo cofactor biosynthesis. In terms of biological role, involved in the biosynthesis of the iron-molybdenum cofactor (FeMo-co or M-cluster) found in the dinitrogenase enzyme of the nitrogenase complex in nitrogen-fixing microorganisms. NifB catalyzes the crucial step of radical SAM-dependent carbide insertion that occurs concomitant with the insertion of a 9th sulfur and the rearrangement/coupling of two [4Fe-4S] clusters into a [8Fe-9S-C] cluster, the precursor to the M-cluster. The protein is FeMo cofactor biosynthesis protein NifB of Methanocaldococcus jannaschii (strain ATCC 43067 / DSM 2661 / JAL-1 / JCM 10045 / NBRC 100440) (Methanococcus jannaschii).